The sequence spans 298 residues: MNFDNKNKNDNYQESIQRIVNQRNNLLKEIENKINQQFGNGNYETLIKSIELIYEIEEKIKRIKELNSLQCDLLEYINPTNSMVPTSPFSSPNFPNSNIEIIDQKQHHQQKLQQQQQQQQQQQQQQQQQQQQQQQQQQQQKQQQKQQQQQLQQSHTKQSPKKQGHNSKQQFLTSLEKHKDQKEENEENEENEENEENEENEENKEKDVEVAKSNKPKRGRPSKPKPEYCFRYGTRSCPYWRKNVIKGELVDVCNACGLHLMKKEKKDLMEKQKNSIKNLLNNDEIITNYDDLGFVLYN.

The stretch at 4-37 forms a coiled coil; that stretch reads DNKNKNDNYQESIQRIVNQRNNLLKEIENKINQQ. Positions 148-227 are disordered; it reads QQQLQQSHTK…RGRPSKPKPE (80 aa). The span at 183–202 shows a compositional bias: acidic residues; that stretch reads EENEENEENEENEENEENEE. Residues 203 to 212 show a composition bias toward basic and acidic residues; it reads NKEKDVEVAK. The segment covering 214 to 223 has biased composition (basic residues); that stretch reads NKPKRGRPSK. A GATA-type; degenerate zinc finger spans residues 229–256; the sequence is CFRYGTRSCPYWRKNVIKGELVDVCNAC.

The polypeptide is Putative GATA zinc finger domain-containing protein 25 (gtaY) (Dictyostelium discoideum (Social amoeba)).